Here is a 249-residue protein sequence, read N- to C-terminus: MVLLPLKKDLVPFLEPYLPDEERDADKEKPYVILTYAQSLDSRIAKIKGTRTFISHEETKTMTHYLRYKFDAIMLGCGTVMIDDPGLNCKWWPEDEKPEHLAGISPRPIILDPNCKWKFADSKMKKLYEAGDGKAPIIVVKELPSEPEEGVDYLVMRTNFTGKMDWSDMLVQLKSKFNVKSVMVEGGGIVINDLLQRPNLVDALIITLGATFLGSEGVEVSPLVEIKLKDVSWWTGDLDTVLCSRLVTH.

Residues T79, D83, M164, and G187 to I191 contribute to the NADP(+) site.

Belongs to the HTP reductase family. As to quaternary structure, homodimer.

The catalysed reaction is 2,5-diamino-6-(1-D-ribitylamino)pyrimidin-4(3H)-one 5'-phosphate + NADP(+) = 2,5-diamino-6-(1-D-ribosylamino)pyrimidin-4(3H)-one 5'-phosphate + NADPH + H(+). It carries out the reaction 2,5-diamino-6-(1-D-ribitylamino)pyrimidin-4(3H)-one 5'-phosphate + NAD(+) = 2,5-diamino-6-(1-D-ribosylamino)pyrimidin-4(3H)-one 5'-phosphate + NADH + H(+). It participates in cofactor biosynthesis; riboflavin biosynthesis. In terms of biological role, catalyzes an early step in riboflavin biosynthesis, the NADPH-dependent reduction of the ribose side chain of 2,5-diamino-6-ribosylamino-4(3H)-pyrimidinone 5'-phosphate, yielding 2,5-diamino-6-ribitylamino-4(3H)-pyrimidinone 5'-phosphate. This is 2,5-diamino-6-ribosylamino-4(3H)-pyrimidinone 5'-phosphate reductase (RIB7) from Kluyveromyces marxianus (Yeast).